A 479-amino-acid polypeptide reads, in one-letter code: ATP synthase subunit beta (479 aa).

An ATP-binding site is contributed by 153-160 (GGAGVGKT).

It belongs to the ATPase alpha/beta chains family. F-type ATPases have 2 components, CF(1) - the catalytic core - and CF(0) - the membrane proton channel. CF(1) has five subunits: alpha(3), beta(3), gamma(1), delta(1), epsilon(1). CF(0) has three main subunits: a(1), b(2) and c(9-12). The alpha and beta chains form an alternating ring which encloses part of the gamma chain. CF(1) is attached to CF(0) by a central stalk formed by the gamma and epsilon chains, while a peripheral stalk is formed by the delta and b chains.

It is found in the cell membrane. It carries out the reaction ATP + H2O + 4 H(+)(in) = ADP + phosphate + 5 H(+)(out). Its activity is regulated as follows. Increases 2-fold following exposure to low pH. Its function is as follows. Produces ATP from ADP in the presence of a proton gradient across the membrane. The catalytic sites are hosted primarily by the beta subunits. This is ATP synthase subunit beta from Lactobacillus acidophilus (strain ATCC 700396 / NCK56 / N2 / NCFM).